The following is a 259-amino-acid chain: Thiazole synthase (259 aa).

Lysine 98 functions as the Schiff-base intermediate with DXP in the catalytic mechanism. Residues glycine 159, 185–186, and 207–208 each bind 1-deoxy-D-xylulose 5-phosphate; these read AG and NS.

Belongs to the ThiG family. As to quaternary structure, homotetramer. Forms heterodimers with either ThiH or ThiS.

It is found in the cytoplasm. It carries out the reaction [ThiS sulfur-carrier protein]-C-terminal-Gly-aminoethanethioate + 2-iminoacetate + 1-deoxy-D-xylulose 5-phosphate = [ThiS sulfur-carrier protein]-C-terminal Gly-Gly + 2-[(2R,5Z)-2-carboxy-4-methylthiazol-5(2H)-ylidene]ethyl phosphate + 2 H2O + H(+). The protein operates within cofactor biosynthesis; thiamine diphosphate biosynthesis. Catalyzes the rearrangement of 1-deoxy-D-xylulose 5-phosphate (DXP) to produce the thiazole phosphate moiety of thiamine. Sulfur is provided by the thiocarboxylate moiety of the carrier protein ThiS. In vitro, sulfur can be provided by H(2)S. The polypeptide is Thiazole synthase (Chlorobium phaeovibrioides (strain DSM 265 / 1930) (Prosthecochloris vibrioformis (strain DSM 265))).